A 179-amino-acid chain; its full sequence is Ribosome maturation factor RimM (179 aa).

A PRC barrel domain is found at 98 to 170 (PDEFWDRRLR…RIVVSGIPGL (73 aa)).

It belongs to the RimM family. In terms of assembly, binds ribosomal protein uS19.

It localises to the cytoplasm. Functionally, an accessory protein needed during the final step in the assembly of 30S ribosomal subunit, possibly for assembly of the head region. Essential for efficient processing of 16S rRNA. May be needed both before and after RbfA during the maturation of 16S rRNA. It has affinity for free ribosomal 30S subunits but not for 70S ribosomes. The polypeptide is Ribosome maturation factor RimM (Cutibacterium acnes (strain DSM 16379 / KPA171202) (Propionibacterium acnes)).